Consider the following 161-residue polypeptide: 2-C-methyl-D-erythritol 2,4-cyclodiphosphate synthase (161 aa).

A divalent metal cation contacts are provided by Asp11 and His13. Residues 11–13 (DIH) and 37–38 (HS) contribute to the 4-CDP-2-C-methyl-D-erythritol 2-phosphate site. His45 lines the a divalent metal cation pocket. Residues 59-61 (DIG), 135-138 (TTNE), and Arg145 contribute to the 4-CDP-2-C-methyl-D-erythritol 2-phosphate site.

The protein belongs to the IspF family. Homotrimer. The cofactor is a divalent metal cation.

It catalyses the reaction 4-CDP-2-C-methyl-D-erythritol 2-phosphate = 2-C-methyl-D-erythritol 2,4-cyclic diphosphate + CMP. It functions in the pathway isoprenoid biosynthesis; isopentenyl diphosphate biosynthesis via DXP pathway; isopentenyl diphosphate from 1-deoxy-D-xylulose 5-phosphate: step 4/6. Functionally, involved in the biosynthesis of isopentenyl diphosphate (IPP) and dimethylallyl diphosphate (DMAPP), two major building blocks of isoprenoid compounds. Catalyzes the conversion of 4-diphosphocytidyl-2-C-methyl-D-erythritol 2-phosphate (CDP-ME2P) to 2-C-methyl-D-erythritol 2,4-cyclodiphosphate (ME-CPP) with a corresponding release of cytidine 5-monophosphate (CMP). The protein is 2-C-methyl-D-erythritol 2,4-cyclodiphosphate synthase of Synechocystis sp. (strain ATCC 27184 / PCC 6803 / Kazusa).